Here is a 554-residue protein sequence, read N- to C-terminus: Estrogen receptor beta (554 aa).

The tract at residues Thr-25–Phe-173 is modulating. 2 NR C4-type zinc fingers span residues Cys-174–Cys-194 and Cys-210–Cys-234. The segment at residues Cys-174–Met-239 is a DNA-binding region (nuclear receptor). An NR LBD domain is found at Ser-289–His-521. A disordered region spans residues Pro-529–Gln-554.

The protein belongs to the nuclear hormone receptor family. NR3 subfamily. As to quaternary structure, binds DNA as a homodimer. Can form a heterodimer with ER-alpha. Brain, pituitary, skeletal muscle, liver, adrenal, kidney, intestine and ovary.

The protein resides in the nucleus. Its function is as follows. Binds estrogens with an affinity similar to that of ER-alpha, and activates expression of reporter genes containing estrogen response elements (ERE) in an estrogen-dependent manner. Locally synthesized estrogens may act via ER beta, in addition to ER alpha, to mediate seasonal or developmental effects on nearby song nuclei. This Sturnus vulgaris (Starling) protein is Estrogen receptor beta (ESR2).